The primary structure comprises 405 residues: Arrestin red cell isoform 2 (405 aa).

This sequence belongs to the arrestin family.

The protein resides in the cytoplasm. This Oncorhynchus mykiss (Rainbow trout) protein is Arrestin red cell isoform 2.